A 367-amino-acid polypeptide reads, in one-letter code: MNVLEQLKRLDEMPKRYKTMERSELEARARAVKERFGRRLFIPGHHYQKDEVIQFADATGDSLQLAQLAAKNSEAEYIVFCGVHFMAETADILTSDDQTVILPDLRAGCSMADMADIFQVERAWAALIERFGETIVPLVYVNSTAAIKAFVGRHGGATVTSSNAKKMMAWAFSRNERIFFLPDQHLGRNTAYALGIRLDEMAVWDPHEETLQGADDLDKVKVILWKGHCSVHENFTVRQIEHIRRMKPGIHVIVHPECSWEVVQQADYAGSTKYIIETIRNAPPGTQWAIGTEMNLVNRLKHEHPDKEIVSLNPYMCPCLTMNRIDLPHFVWALESLEQGAIVNRITVPKDIAAEAKEALDRMLSLA.

The iminosuccinate site is built by histidine 45 and serine 62. Cysteine 109 is a binding site for [4Fe-4S] cluster. Residues 140–142 (YVN) and serine 161 each bind iminosuccinate. Position 229 (cysteine 229) interacts with [4Fe-4S] cluster. Residues 255-257 (HPE) and threonine 272 contribute to the iminosuccinate site. Residue cysteine 319 participates in [4Fe-4S] cluster binding.

It belongs to the quinolinate synthase family. Type 3 subfamily. Requires [4Fe-4S] cluster as cofactor.

The protein resides in the cytoplasm. It catalyses the reaction iminosuccinate + dihydroxyacetone phosphate = quinolinate + phosphate + 2 H2O + H(+). The protein operates within cofactor biosynthesis; NAD(+) biosynthesis; quinolinate from iminoaspartate: step 1/1. In terms of biological role, catalyzes the condensation of iminoaspartate with dihydroxyacetone phosphate to form quinolinate. This is Quinolinate synthase from Geobacillus kaustophilus (strain HTA426).